A 258-amino-acid chain; its full sequence is Spindlin-2B (258 aa).

Over residues 1–23 (MKTPNAQEAEGQQTRAAAGRATG) the composition is skewed to low complexity. Residues 1-49 (MKTPNAQEAEGQQTRAAAGRATGSANMTKKKVSQKKQRGRPSSQPRRNI) are disordered. Residues 28–39 (TKKKVSQKKQRG) show a composition bias toward basic residues. 3 tudor-like domain regions span residues 50–99 (VGCR…LELH), 129–178 (IGKA…YQLL), and 210–255 (IGKH…YDLV). Histone H3K4me3 and H3R8me2a binding stretches follow at residues glutamate 138 and 246–248 (DFH).

Belongs to the SPIN/STSY family. As to quaternary structure, interacts with C11orf84/SPINDOC. As to expression, detected in all the examined tissues with highest expression in liver, followed by heart, stomach, kidney, skeletal muscle, placenta, and pancreas.

The protein resides in the nucleus. Its function is as follows. Involved in the regulation of cell cycle progression, this activity is related to the inhibition of apoptosis following the removal of essential growth factors. Exhibits H3K4me3-binding activity. In Homo sapiens (Human), this protein is Spindlin-2B (SPIN2B).